A 25-amino-acid polypeptide reads, in one-letter code: Cytochrome c oxidase polypeptide VIIc (25 aa).

The disordered stretch occupies residues 1-25; the sequence is SHYSEGPGQNLPFSVQNKXRLLGMM.

This sequence belongs to the cytochrome c oxidase VIIc family. Component of the cytochrome c oxidase (complex IV, CIV), a multisubunit enzyme composed of 14 subunits. The complex is composed of a catalytic core of 3 subunits MT-CO1, MT-CO2 and MT-CO3, encoded in the mitochondrial DNA, and 11 supernumerary subunits COX4I, COX5A, COX5B, COX6A, COX6B, COX6C, COX7A, COX7B, COX7C, COX8 and NDUFA4, which are encoded in the nuclear genome. The complex exists as a monomer or a dimer and forms supercomplexes (SCs) in the inner mitochondrial membrane with NADH-ubiquinone oxidoreductase (complex I, CI) and ubiquinol-cytochrome c oxidoreductase (cytochrome b-c1 complex, complex III, CIII), resulting in different assemblies (supercomplex SCI(1)III(2)IV(1) and megacomplex MCI(2)III(2)IV(2)). Interacts with RAB5IF.

Its subcellular location is the mitochondrion inner membrane. It functions in the pathway energy metabolism; oxidative phosphorylation. In terms of biological role, component of the cytochrome c oxidase, the last enzyme in the mitochondrial electron transport chain which drives oxidative phosphorylation. The respiratory chain contains 3 multisubunit complexes succinate dehydrogenase (complex II, CII), ubiquinol-cytochrome c oxidoreductase (cytochrome b-c1 complex, complex III, CIII) and cytochrome c oxidase (complex IV, CIV), that cooperate to transfer electrons derived from NADH and succinate to molecular oxygen, creating an electrochemical gradient over the inner membrane that drives transmembrane transport and the ATP synthase. Cytochrome c oxidase is the component of the respiratory chain that catalyzes the reduction of oxygen to water. Electrons originating from reduced cytochrome c in the intermembrane space (IMS) are transferred via the dinuclear copper A center (CU(A)) of subunit 2 and heme A of subunit 1 to the active site in subunit 1, a binuclear center (BNC) formed by heme A3 and copper B (CU(B)). The BNC reduces molecular oxygen to 2 water molecules using 4 electrons from cytochrome c in the IMS and 4 protons from the mitochondrial matrix. This is Cytochrome c oxidase polypeptide VIIc from Oncorhynchus mykiss (Rainbow trout).